The sequence spans 426 residues: Na(+)/H(+) antiporter 1 (426 aa).

A run of 12 helical transmembrane segments spans residues 1-21 (MELM…SLVA), 29-49 (IPDI…LQII), 57-77 (IFEY…AFTM), 95-115 (ITFL…LNLP), 120-140 (VGYL…IPVF), 158-178 (IFND…FGLF), 184-204 (LIDL…LAKI), 208-228 (IIIH…GAML), 236-256 (LLPS…IMGL), 286-306 (VFIF…NYFI), 309-329 (LLVA…LGLI), and 382-402 (IAGT…ILEA).

It belongs to the monovalent cation:proton antiporter 1 (CPA1) transporter (TC 2.A.36) family.

The protein localises to the cell membrane. Its function is as follows. This is a Na(+)/H(+) antiporter. Can also transport lithium. In Methanocaldococcus jannaschii (strain ATCC 43067 / DSM 2661 / JAL-1 / JCM 10045 / NBRC 100440) (Methanococcus jannaschii), this protein is Na(+)/H(+) antiporter 1.